Consider the following 493-residue polypeptide: 3-octaprenyl-4-hydroxybenzoate carboxy-lyase (493 aa).

Asn172 contributes to the Mn(2+) binding site. Residues 175–177 (IYR), 189–191 (RWL), and 194–195 (RG) contribute to the prenylated FMN site. Glu238 contacts Mn(2+). The active-site Proton donor is Asp287.

The protein belongs to the UbiD family. As to quaternary structure, homohexamer. Requires prenylated FMN as cofactor. Mn(2+) is required as a cofactor.

Its subcellular location is the cell membrane. It catalyses the reaction a 4-hydroxy-3-(all-trans-polyprenyl)benzoate + H(+) = a 2-(all-trans-polyprenyl)phenol + CO2. It functions in the pathway cofactor biosynthesis; ubiquinone biosynthesis. In terms of biological role, catalyzes the decarboxylation of 3-octaprenyl-4-hydroxy benzoate to 2-octaprenylphenol, an intermediate step in ubiquinone biosynthesis. In Shewanella sediminis (strain HAW-EB3), this protein is 3-octaprenyl-4-hydroxybenzoate carboxy-lyase.